The primary structure comprises 221 residues: Probable GTP-binding protein EngB (221 aa).

Residues 23-211 (PLREVAFAGR…DNLIIKWLFE (189 aa)) form the EngB-type G domain. Residues Ser38 and Thr60 each contribute to the Mg(2+) site.

The protein belongs to the TRAFAC class TrmE-Era-EngA-EngB-Septin-like GTPase superfamily. EngB GTPase family. It depends on Mg(2+) as a cofactor.

Functionally, necessary for normal cell division and for the maintenance of normal septation. The polypeptide is Probable GTP-binding protein EngB (Polynucleobacter asymbioticus (strain DSM 18221 / CIP 109841 / QLW-P1DMWA-1) (Polynucleobacter necessarius subsp. asymbioticus)).